Here is a 181-residue protein sequence, read N- to C-terminus: TTTTYDRHFTTTQPHYRQDDRSRYDQQTHSQSTSRTLAIIALLPVGGILLGLAALTFIGTLIGLALATPLFVIFSPIIVPAVLTIGLAVTGFLASGTFGLTGLSSLSYLFNMVRQTAGSVPESLDYVKGTLQDAGEYAGQKTKDFGQKIQSTAHEMGDQGQVGVHAQVGGGKEGRKSGDRT.

The interval 1-28 (TTTTYDRHFTTTQPHYRQDDRSRYDQQT) is disordered. The segment at 1-38 (TTTTYDRHFTTTQPHYRQDDRSRYDQQTHSQSTSRTLA) is polar. Over residues 16-26 (YRQDDRSRYDQ) the composition is skewed to basic and acidic residues. 3 consecutive transmembrane segments (helical) span residues 38–58 (AIIA…LTFI), 69–89 (PLFV…GLAV), and 90–110 (TGFL…SYLF). Positions 39–110 (IIALLPVGGI…TGLSSLSYLF (72 aa)) are hydrophobic. Residues 155-181 (EMGDQGQVGVHAQVGGGKEGRKSGDRT) are disordered. The span at 158–167 (DQGQVGVHAQ) shows a compositional bias: low complexity. Basic and acidic residues predominate over residues 172–181 (KEGRKSGDRT).

It belongs to the oleosin family.

It is found in the lipid droplet. The protein localises to the membrane. In terms of biological role, may have a structural role to stabilize the lipid body during desiccation of the seed by preventing coalescence of the oil. Probably interacts with both lipid and phospholipid moieties of lipid bodies. May also provide recognition signals for specific lipase anchorage in lipolysis during seedling growth. This is Oleosin from Helianthus annuus (Common sunflower).